Consider the following 274-residue polypeptide: Diaminopimelate epimerase (274 aa).

Residues asparagine 11, glutamine 44, and asparagine 64 each contribute to the substrate site. Cysteine 73 acts as the Proton donor in catalysis. Residues 74-75, asparagine 157, asparagine 190, and 208-209 each bind substrate; these read GN and ER. Residue cysteine 217 is the Proton acceptor of the active site. 218 to 219 contacts substrate; that stretch reads GS.

The protein belongs to the diaminopimelate epimerase family. As to quaternary structure, homodimer.

It localises to the cytoplasm. The catalysed reaction is (2S,6S)-2,6-diaminopimelate = meso-2,6-diaminopimelate. Its pathway is amino-acid biosynthesis; L-lysine biosynthesis via DAP pathway; DL-2,6-diaminopimelate from LL-2,6-diaminopimelate: step 1/1. Functionally, catalyzes the stereoinversion of LL-2,6-diaminopimelate (L,L-DAP) to meso-diaminopimelate (meso-DAP), a precursor of L-lysine and an essential component of the bacterial peptidoglycan. The sequence is that of Diaminopimelate epimerase from Escherichia fergusonii (strain ATCC 35469 / DSM 13698 / CCUG 18766 / IAM 14443 / JCM 21226 / LMG 7866 / NBRC 102419 / NCTC 12128 / CDC 0568-73).